An 860-amino-acid polypeptide reads, in one-letter code: Leucine--tRNA ligase (860 aa).

Residues Pro42 to His52 carry the 'HIGH' region motif. The 'KMSKS' region motif lies at Lys619–Ser623. Lys622 is an ATP binding site.

The protein belongs to the class-I aminoacyl-tRNA synthetase family.

It is found in the cytoplasm. It carries out the reaction tRNA(Leu) + L-leucine + ATP = L-leucyl-tRNA(Leu) + AMP + diphosphate. This Yersinia pseudotuberculosis serotype I (strain IP32953) protein is Leucine--tRNA ligase.